The following is a 284-amino-acid chain: Polyamine aminopropyltransferase (284 aa).

Positions 6 to 242 (KGWFTEVCKE…GWWSATLAGH (237 aa)) constitute a PABS domain. An S-methyl-5'-thioadenosine-binding site is contributed by Q36. Residues H67 and D91 each contribute to the spermidine site. Residues E111 and 142–143 (DG) contribute to the S-methyl-5'-thioadenosine site. Residue D161 is the Proton acceptor of the active site. 161–164 (DSTD) provides a ligand contact to spermidine.

This sequence belongs to the spermidine/spermine synthase family. As to quaternary structure, homodimer or homotetramer.

The protein resides in the cytoplasm. The enzyme catalyses S-adenosyl 3-(methylsulfanyl)propylamine + putrescine = S-methyl-5'-thioadenosine + spermidine + H(+). It participates in amine and polyamine biosynthesis; spermidine biosynthesis; spermidine from putrescine: step 1/1. Its function is as follows. Catalyzes the irreversible transfer of a propylamine group from the amino donor S-adenosylmethioninamine (decarboxy-AdoMet) to putrescine (1,4-diaminobutane) to yield spermidine. This chain is Polyamine aminopropyltransferase, found in Nitrosococcus oceani (strain ATCC 19707 / BCRC 17464 / JCM 30415 / NCIMB 11848 / C-107).